The chain runs to 262 residues: Thiamine thiazole synthase (262 aa).

Residues Ser40, 59 to 60 (ER), Gly67, Val133, and 159 to 161 (HID) contribute to the NAD(+) site. 2 residues coordinate Fe cation: Asp161 and His176. Residues Ser179 and Met226 each contribute to the NAD(+) site. Arg236 contacts glycine.

It belongs to the THI4 family. Homooctamer; tetramer of dimers. It depends on Fe(2+) as a cofactor.

The enzyme catalyses hydrogen sulfide + glycine + NAD(+) = ADP-5-ethyl-4-methylthiazole-2-carboxylate + nicotinamide + 3 H2O + H(+). It functions in the pathway cofactor biosynthesis; thiamine diphosphate biosynthesis. Involved in the biosynthesis of the thiazole moiety of thiamine. Catalyzes the conversion of NAD and glycine to adenosine diphosphate 5-(2-hydroxyethyl)-4-methylthiazole-2-carboxylate (ADT), an adenylated thiazole intermediate, using free sulfide as a source of sulfur. The polypeptide is Thiamine thiazole synthase (Methanococcus maripaludis (strain C7 / ATCC BAA-1331)).